The following is a 487-amino-acid chain: 7-deoxyloganetin glucosyltransferase (487 aa).

Histidine 25 acts as the Proton acceptor in catalysis. An an anthocyanidin-binding site is contributed by histidine 25. Catalysis depends on aspartate 129, which acts as the Charge relay. Positions 151, 366, 381, 384, 385, 386, and 389 each coordinate UDP-alpha-D-glucose. Alanine 404 contributes to the an anthocyanidin binding site. Positions 405 and 406 each coordinate UDP-alpha-D-glucose.

The protein belongs to the UDP-glycosyltransferase family. Expressed in roots.

The catalysed reaction is 7-deoxyloganetin + UDP-alpha-D-glucose = 7-deoxyloganin + UDP + H(+). Iridoid glucosyltransferase acting exclusively on 7-deoxyloganetin. No activity with 7-deoxyloganetic acid. The sequence is that of 7-deoxyloganetin glucosyltransferase (UGT85A23) from Catharanthus roseus (Madagascar periwinkle).